Here is a 159-residue protein sequence, read N- to C-terminus: UPF0262 protein TM1040_3562 (159 aa).

A disordered region spans residues 1 to 21 (MSRISQIELDDRNLPPPTPEI).

It belongs to the UPF0262 family.

In Ruegeria sp. (strain TM1040) (Silicibacter sp.), this protein is UPF0262 protein TM1040_3562.